Consider the following 708-residue polypeptide: Leukotoxin translocation ATP-binding protein LktB (708 aa).

The Peptidase C39 domain occupies methionine 1–valine 126. The region spanning phenylalanine 155–glutamine 437 is the ABC transmembrane type-1 domain. Transmembrane regions (helical) follow at residues leucine 159–valine 179, leucine 192–leucine 212, alanine 270–tyrosine 290, leucine 296–leucine 316, and valine 389–glycine 409. Residues isoleucine 469–glutamine 704 enclose the ABC transporter domain. Residue glycine 503 to serine 510 coordinates ATP.

This sequence belongs to the ABC transporter superfamily. Protein-1 exporter (TC 3.A.1.109) family. Homodimer.

The protein resides in the cell inner membrane. It catalyses the reaction ATP + H2O + proteinSide 1 = ADP + phosphate + proteinSide 2.. Its function is as follows. Part of the ABC transporter complex LktBD involved in leukotoxin export. Transmembrane domains (TMD) form a pore in the inner membrane and the ATP-binding domain (NBD) is responsible for energy generation. In Mannheimia haemolytica (Pasteurella haemolytica), this protein is Leukotoxin translocation ATP-binding protein LktB (lktB).